The chain runs to 410 residues: CinA-like protein (410 aa).

The protein belongs to the CinA family.

The chain is CinA-like protein from Anaeromyxobacter sp. (strain Fw109-5).